A 305-amino-acid polypeptide reads, in one-letter code: MRLAFMGTPDFAVPALHALHEAGHEIAVVYSQPPRPAGRGQAVRPQPVHLAAEALGIPVRVPTRLRANHDEHAFFRALDLDAAVVAAYGLILPGAMLTPRAGARLNVHASLLPRWRGAAPIQAAILAGDDESGVTIMQMDEGLDTGAMLLTGRVALTPATTASTLHDDLAAMGGRLIVAALANSETAAIPQPAEGATYAARLTREDGRIDWTRDAVDIDRQVRALTPWPGTFTTLDGTVLKIGAATPIDGPRDAVPGTVLDDRLTVACGQGTLRLTRIQRPGRGMMEADAFLRGQPVPVGTRLGS.

Residue 110–113 (SLLP) participates in (6S)-5,6,7,8-tetrahydrofolate binding.

Belongs to the Fmt family.

The enzyme catalyses L-methionyl-tRNA(fMet) + (6R)-10-formyltetrahydrofolate = N-formyl-L-methionyl-tRNA(fMet) + (6S)-5,6,7,8-tetrahydrofolate + H(+). Functionally, attaches a formyl group to the free amino group of methionyl-tRNA(fMet). The formyl group appears to play a dual role in the initiator identity of N-formylmethionyl-tRNA by promoting its recognition by IF2 and preventing the misappropriation of this tRNA by the elongation apparatus. This Gluconacetobacter diazotrophicus (strain ATCC 49037 / DSM 5601 / CCUG 37298 / CIP 103539 / LMG 7603 / PAl5) protein is Methionyl-tRNA formyltransferase.